The primary structure comprises 438 residues: Diaminopimelate decarboxylase (438 aa).

N6-(pyridoxal phosphate)lysine is present on Lys-73. Residues Ser-217, Gly-254, and 294 to 297 (EPGR) each bind pyridoxal 5'-phosphate. Residues Arg-297, Arg-333, and Tyr-337 each contribute to the substrate site. Cys-362 functions as the Proton donor in the catalytic mechanism. Residues Glu-363 and Tyr-391 each contribute to the substrate site. Pyridoxal 5'-phosphate is bound at residue Tyr-391.

This sequence belongs to the Orn/Lys/Arg decarboxylase class-II family. LysA subfamily. As to quaternary structure, homodimer. The cofactor is pyridoxal 5'-phosphate.

It carries out the reaction meso-2,6-diaminopimelate + H(+) = L-lysine + CO2. Its pathway is amino-acid biosynthesis; L-lysine biosynthesis via DAP pathway; L-lysine from DL-2,6-diaminopimelate: step 1/1. Competitively inhibited by the substrate analog azelaic acid in vitro but not in vivo. Its function is as follows. Specifically catalyzes the decarboxylation of meso-diaminopimelate (meso-DAP) to L-lysine. The sequence is that of Diaminopimelate decarboxylase from Methanocaldococcus jannaschii (strain ATCC 43067 / DSM 2661 / JAL-1 / JCM 10045 / NBRC 100440) (Methanococcus jannaschii).